Here is a 744-residue protein sequence, read N- to C-terminus: NAD(P)H-quinone oxidoreductase subunit 5, chloroplastic (744 aa).

16 consecutive transmembrane segments (helical) span residues 9–29, 40–60, 89–109, 125–145, 147–167, 185–205, 219–239, 258–278, 290–312, 327–347, 354–374, 396–416, 425–445, 549–569, 608–628, and 724–744; these read WIIP…LLLF, WAFQ…NLSI, IDPL…MVLI, FAYM…SNLI, IYIF…FWFT, GDFG…SFEF, NEVN…GAIA, TPIS…FLVA, IMNF…ALAQ, LGYM…FHLI, ALLF…VGYC, TSFL…CFWS, WLYS…TAFY, LFPI…GIPF, VFSV…YKPV, and YLFF…FLNF.

It belongs to the complex I subunit 5 family. In terms of assembly, NDH is composed of at least 16 different subunits, 5 of which are encoded in the nucleus.

Its subcellular location is the plastid. The protein resides in the chloroplast thylakoid membrane. It catalyses the reaction a plastoquinone + NADH + (n+1) H(+)(in) = a plastoquinol + NAD(+) + n H(+)(out). The enzyme catalyses a plastoquinone + NADPH + (n+1) H(+)(in) = a plastoquinol + NADP(+) + n H(+)(out). Functionally, NDH shuttles electrons from NAD(P)H:plastoquinone, via FMN and iron-sulfur (Fe-S) centers, to quinones in the photosynthetic chain and possibly in a chloroplast respiratory chain. The immediate electron acceptor for the enzyme in this species is believed to be plastoquinone. Couples the redox reaction to proton translocation, and thus conserves the redox energy in a proton gradient. The polypeptide is NAD(P)H-quinone oxidoreductase subunit 5, chloroplastic (ndhF) (Adenocaulon himalaicum (Trailplant)).